We begin with the raw amino-acid sequence, 285 residues long: Bifunctional protein FolD (285 aa).

NADP(+) is bound by residues 166-168 (GAS), serine 191, and isoleucine 232.

It belongs to the tetrahydrofolate dehydrogenase/cyclohydrolase family. As to quaternary structure, homodimer.

The catalysed reaction is (6R)-5,10-methylene-5,6,7,8-tetrahydrofolate + NADP(+) = (6R)-5,10-methenyltetrahydrofolate + NADPH. It catalyses the reaction (6R)-5,10-methenyltetrahydrofolate + H2O = (6R)-10-formyltetrahydrofolate + H(+). It participates in one-carbon metabolism; tetrahydrofolate interconversion. Functionally, catalyzes the oxidation of 5,10-methylenetetrahydrofolate to 5,10-methenyltetrahydrofolate and then the hydrolysis of 5,10-methenyltetrahydrofolate to 10-formyltetrahydrofolate. The sequence is that of Bifunctional protein FolD from Edwardsiella ictaluri (strain 93-146).